The following is a 195-amino-acid chain: Molybdenum cofactor guanylyltransferase (195 aa).

GTP is bound by residues 10–12, lysine 23, asparagine 51, aspartate 69, and aspartate 99; that span reads LAG. Mg(2+) is bound at residue aspartate 99.

Belongs to the MobA family. As to quaternary structure, monomer. Mg(2+) serves as cofactor.

It localises to the cytoplasm. The enzyme catalyses Mo-molybdopterin + GTP + H(+) = Mo-molybdopterin guanine dinucleotide + diphosphate. Transfers a GMP moiety from GTP to Mo-molybdopterin (Mo-MPT) cofactor (Moco or molybdenum cofactor) to form Mo-molybdopterin guanine dinucleotide (Mo-MGD) cofactor. The sequence is that of Molybdenum cofactor guanylyltransferase from Histophilus somni (strain 2336) (Haemophilus somnus).